The sequence spans 197 residues: UPF0725 protein At5g41640 (197 aa).

It belongs to the UPF0725 (EMB2204) family.

This chain is UPF0725 protein At5g41640, found in Arabidopsis thaliana (Mouse-ear cress).